The chain runs to 197 residues: Dephospho-CoA kinase (197 aa).

In terms of domain architecture, DPCK spans leucine 4–lysine 197. Alanine 12–threonine 17 lines the ATP pocket.

This sequence belongs to the CoaE family.

The protein resides in the cytoplasm. It carries out the reaction 3'-dephospho-CoA + ATP = ADP + CoA + H(+). Its pathway is cofactor biosynthesis; coenzyme A biosynthesis; CoA from (R)-pantothenate: step 5/5. Functionally, catalyzes the phosphorylation of the 3'-hydroxyl group of dephosphocoenzyme A to form coenzyme A. The sequence is that of Dephospho-CoA kinase from Lactiplantibacillus plantarum (strain ATCC BAA-793 / NCIMB 8826 / WCFS1) (Lactobacillus plantarum).